Consider the following 38-residue polypeptide: Trypsin inhibitor 2 (38 aa).

Gln1 carries the pyrrolidone carboxylic acid modification.

Contains disulfide bonds.

Functionally, inhibits trypsin-like proteases from the guts of the insect pests P.truncatus, P.americana, Acheta sp and Gryllus sp. The polypeptide is Trypsin inhibitor 2 (Opuntia streptacantha (Prickly pear cactus)).